A 310-amino-acid polypeptide reads, in one-letter code: Lipoyl synthase (310 aa).

Residues cysteine 45, cysteine 50, cysteine 56, cysteine 71, cysteine 75, cysteine 78, and serine 285 each coordinate [4Fe-4S] cluster. The region spanning 57–274 (WTKKHATVMI…GSIARAKGFL (218 aa)) is the Radical SAM core domain.

It belongs to the radical SAM superfamily. Lipoyl synthase family. The cofactor is [4Fe-4S] cluster.

The protein resides in the cytoplasm. It carries out the reaction [[Fe-S] cluster scaffold protein carrying a second [4Fe-4S](2+) cluster] + N(6)-octanoyl-L-lysyl-[protein] + 2 oxidized [2Fe-2S]-[ferredoxin] + 2 S-adenosyl-L-methionine + 4 H(+) = [[Fe-S] cluster scaffold protein] + N(6)-[(R)-dihydrolipoyl]-L-lysyl-[protein] + 4 Fe(3+) + 2 hydrogen sulfide + 2 5'-deoxyadenosine + 2 L-methionine + 2 reduced [2Fe-2S]-[ferredoxin]. Its pathway is protein modification; protein lipoylation via endogenous pathway; protein N(6)-(lipoyl)lysine from octanoyl-[acyl-carrier-protein]: step 2/2. Catalyzes the radical-mediated insertion of two sulfur atoms into the C-6 and C-8 positions of the octanoyl moiety bound to the lipoyl domains of lipoate-dependent enzymes, thereby converting the octanoylated domains into lipoylated derivatives. This chain is Lipoyl synthase, found in Novosphingobium aromaticivorans (strain ATCC 700278 / DSM 12444 / CCUG 56034 / CIP 105152 / NBRC 16084 / F199).